The chain runs to 63 residues: Large ribosomal subunit protein uL29 (63 aa).

It belongs to the universal ribosomal protein uL29 family.

This chain is Large ribosomal subunit protein uL29, found in Actinobacillus succinogenes (strain ATCC 55618 / DSM 22257 / CCUG 43843 / 130Z).